Here is a 475-residue protein sequence, read N- to C-terminus: NADH-quinone oxidoreductase subunit N (475 aa).

A run of 14 helical transmembrane segments spans residues 5-25, 32-52, 71-91, 99-119, 121-141, 155-175, 193-213, 232-252, 266-286, 294-314, 322-342, 366-386, 389-409, and 439-459; these read LALP…FGVV, FLSC…LVVM, FMKI…VGYA, FEFP…ASSE, LMTL…LCAF, YFVL…LVYG, STAV…GLTF, PTSV…ALLL, WQIL…LAAI, LMAY…CAGT, LVYL…IIAM, ATAM…AGFF, MMVF…IGVV, and LSLS…LLVL.

The protein belongs to the complex I subunit 2 family. As to quaternary structure, NDH-1 is composed of 14 different subunits. Subunits NuoA, H, J, K, L, M, N constitute the membrane sector of the complex.

Its subcellular location is the cell inner membrane. It carries out the reaction a quinone + NADH + 5 H(+)(in) = a quinol + NAD(+) + 4 H(+)(out). Functionally, NDH-1 shuttles electrons from NADH, via FMN and iron-sulfur (Fe-S) centers, to quinones in the respiratory chain. The immediate electron acceptor for the enzyme in this species is believed to be ubiquinone. Couples the redox reaction to proton translocation (for every two electrons transferred, four hydrogen ions are translocated across the cytoplasmic membrane), and thus conserves the redox energy in a proton gradient. In Gluconacetobacter diazotrophicus (strain ATCC 49037 / DSM 5601 / CCUG 37298 / CIP 103539 / LMG 7603 / PAl5), this protein is NADH-quinone oxidoreductase subunit N.